The chain runs to 75 residues: DNA-directed RNA polymerase subunit omega (75 aa).

Belongs to the RNA polymerase subunit omega family. In terms of assembly, in cyanobacteria the RNAP catalytic core is composed of 2 alpha, 1 beta, 1 beta', 1 gamma and 1 omega subunit. When a sigma factor is associated with the core the holoenzyme is formed, which can initiate transcription.

It catalyses the reaction RNA(n) + a ribonucleoside 5'-triphosphate = RNA(n+1) + diphosphate. Its function is as follows. Promotes RNA polymerase assembly. Latches the N- and C-terminal regions of the beta' subunit thereby facilitating its interaction with the beta and alpha subunits. The polypeptide is DNA-directed RNA polymerase subunit omega (Synechococcus sp. (strain CC9605)).